Consider the following 117-residue polypeptide: Ribonuclease P protein component (117 aa).

This sequence belongs to the RnpA family. In terms of assembly, consists of a catalytic RNA component (M1 or rnpB) and a protein subunit.

The enzyme catalyses Endonucleolytic cleavage of RNA, removing 5'-extranucleotides from tRNA precursor.. Functionally, RNaseP catalyzes the removal of the 5'-leader sequence from pre-tRNA to produce the mature 5'-terminus. It can also cleave other RNA substrates such as 4.5S RNA. The protein component plays an auxiliary but essential role in vivo by binding to the 5'-leader sequence and broadening the substrate specificity of the ribozyme. This Nocardioides sp. (strain ATCC BAA-499 / JS614) protein is Ribonuclease P protein component.